A 148-amino-acid polypeptide reads, in one-letter code: Ubiquitin-conjugating enzyme E2 30 (148 aa).

The UBC core domain maps to 1 to 147; sequence MASKRINKEL…AQSWTQKYAM (147 aa). Cys-85 serves as the catalytic Glycyl thioester intermediate.

It belongs to the ubiquitin-conjugating enzyme family. As to quaternary structure, interacts with RGLG3 and RGLG4. Ubiquitously expressed at very low levels.

The enzyme catalyses S-ubiquitinyl-[E1 ubiquitin-activating enzyme]-L-cysteine + [E2 ubiquitin-conjugating enzyme]-L-cysteine = [E1 ubiquitin-activating enzyme]-L-cysteine + S-ubiquitinyl-[E2 ubiquitin-conjugating enzyme]-L-cysteine.. The protein operates within protein modification; protein ubiquitination. In terms of biological role, accepts the ubiquitin from the E1 complex and catalyzes its covalent attachment to other proteins. The protein is Ubiquitin-conjugating enzyme E2 30 (UBC30) of Arabidopsis thaliana (Mouse-ear cress).